A 673-amino-acid chain; its full sequence is UvrABC system protein B (673 aa).

Residues 26–183 form the Helicase ATP-binding domain; sequence ANFEAGLAKQ…RHLTDLQYTR (158 aa). Residue 39–46 participates in ATP binding; that stretch reads GVTGSGKT. The Beta-hairpin signature appears at 92-115; that stretch reads YYDYYQPEAYVPSSDTFIEKDSSI. The region spanning 431-597 is the Helicase C-terminal domain; it reads QVDDLMSEIH…SVERPISDIM (167 aa). The interval 601–631 is disordered; sequence REDAAEKKSGKGRSKSRQVAEETPDYRAMKP. Positions 618-630 are enriched in basic and acidic residues; sequence QVAEETPDYRAMK. Positions 635–670 constitute a UVR domain; the sequence is AGKLKSLEQKMYQHAKDLEFEAAAQIRDQIQKLKTA.

This sequence belongs to the UvrB family. Forms a heterotetramer with UvrA during the search for lesions. Interacts with UvrC in an incision complex.

The protein localises to the cytoplasm. The UvrABC repair system catalyzes the recognition and processing of DNA lesions. A damage recognition complex composed of 2 UvrA and 2 UvrB subunits scans DNA for abnormalities. Upon binding of the UvrA(2)B(2) complex to a putative damaged site, the DNA wraps around one UvrB monomer. DNA wrap is dependent on ATP binding by UvrB and probably causes local melting of the DNA helix, facilitating insertion of UvrB beta-hairpin between the DNA strands. Then UvrB probes one DNA strand for the presence of a lesion. If a lesion is found the UvrA subunits dissociate and the UvrB-DNA preincision complex is formed. This complex is subsequently bound by UvrC and the second UvrB is released. If no lesion is found, the DNA wraps around the other UvrB subunit that will check the other stand for damage. This chain is UvrABC system protein B, found in Xanthomonas oryzae pv. oryzae (strain PXO99A).